The chain runs to 1053 residues: Mgp-operon protein 3 (1053 aa).

An N-terminal signal peptide occupies residues 1–25 (MKTMRKQIYKKAYWLLLPFLPLALA). Disordered regions lie at residues 162–207 (SLAK…GFKL) and 224–261 (EPID…GGSS). The span at 164–175 (AKEKGKTQREVH) shows a compositional bias: basic and acidic residues. Positions 179 to 207 (GQANQWTSQRNQHDLNNNPSPNASTGFKL) are enriched in polar residues. A helical transmembrane segment spans residues 946 to 966 (VGSSVGILFILLVLGLGIGIP). The interval 1024–1053 (AAFLKPPVQPPSKPEGEQKAVEVKSEETKS) is disordered. The segment covering 1037–1053 (PEGEQKAVEVKSEETKS) has biased composition (basic and acidic residues).

It is found in the cell membrane. This Mycoplasma genitalium (strain ATCC 33530 / DSM 19775 / NCTC 10195 / G37) (Mycoplasmoides genitalium) protein is Mgp-operon protein 3.